Consider the following 124-residue polypeptide: Non-structural protein 2 (124 aa).

The DLNP; interaction with MAP1B motif lies at 121 to 124 (DLNP).

The protein belongs to the pneumovirus non-structural protein 2 family. In terms of assembly, monomer (instable). Homomultimer. Heteromultimer with NS1. Interacts with host RIGI (via N-terminus); this interaction prevents host signaling pathway involved in interferon production. Interacts with host MAP1B/microtubule-associated protein 1B.

It localises to the host mitochondrion. Functionally, plays a major role in antagonizing the type I IFN-mediated antiviral response. Acts cooperatively with NS1 to repress activation and nuclear translocation of host IFN-regulatory factor IRF3. Interacts with the host cytoplasmic sensor of viral nucleic acids RIGI and prevents the interaction with its downstream partner MAVS. Together with NS2, participates in the proteasomal degradation of host STAT2, IRF3, IRF7, TBK1 and RIGI through a NS-degradasome involving CUL2 and Elongin-C. The degradasome requires an intact mitochondrial MAVS. Induces host SOCS1 expression. Induces activation of NF-kappa-B. Suppresses premature apoptosis by an NF-kappa-B-dependent, interferon-independent mechanism promoting continued viral replication. The chain is Non-structural protein 2 (1B) from Bos taurus (Bovine).